Here is a 275-residue protein sequence, read N- to C-terminus: Voltage-dependent calcium channel gamma-5 subunit (275 aa).

The next 4 helical transmembrane spans lie at 8 to 28 (ALTLLSSVFAVCGLGLLGIAV), 103 to 123 (FPLVSLFFMFIGFILNNIGHI), 129 to 149 (ILAFVSGIFFILSGLSLVVGL), and 176 to 196 (GWSFAFAAISFLLTESAGVMS).

This sequence belongs to the PMP-22/EMP/MP20 family. CACNG subfamily. As to quaternary structure, the L-type calcium channel is composed of five subunits: alpha-1, alpha-2/delta, beta and gamma. Acts as an auxiliary subunit for AMPA-selective glutamate receptors (AMPARs). Found in a complex with GRIA1, GRIA2, GRIA3, GRIA4, CNIH2, CNIH3, CACNG2, CACNG3, CACNG4, CACNG7 and CACNG8. Interacts with GRIA1, GRIA2, GRIA3 and GRIA4.

Its subcellular location is the membrane. It localises to the postsynaptic density membrane. Functionally, regulates the gating properties of AMPA-selective glutamate receptors (AMPARs). Modulates their gating properties by accelerating their rates of activation, deactivation and desensitization. Displays subunit-specific AMPA receptor regulation. Shows specificity for GRIA1, GRIA4 and the long isoform of GRIA2. Thought to stabilize the calcium channel in an inactivated (closed) state. In Homo sapiens (Human), this protein is Voltage-dependent calcium channel gamma-5 subunit (CACNG5).